The chain runs to 325 residues: Foldase protein PrsA (325 aa).

The signal sequence occupies residues 1-20 (MKLMNKIIVPVTASALLLGA). A lipid anchor (N-palmitoyl cysteine) is attached at Cys-21. Cys-21 carries S-diacylglycerol cysteine lipidation. Residues 139–245 (ENSKKASHIL…YGYHIIKADK (107 aa)) enclose the PpiC domain. Disordered regions lie at residues 159–202 (EGLS…KKDG) and 303–325 (PDKIKQQQQQQSQGGSGLTNSGS).

The protein belongs to the PrsA family.

It localises to the cell membrane. It carries out the reaction [protein]-peptidylproline (omega=180) = [protein]-peptidylproline (omega=0). In terms of biological role, plays a major role in protein secretion by helping the post-translocational extracellular folding of several secreted proteins. The chain is Foldase protein PrsA from Staphylococcus epidermidis (strain ATCC 12228 / FDA PCI 1200).